The primary structure comprises 298 residues: Ethylmalonyl-CoA decarboxylase (298 aa).

This sequence belongs to the enoyl-CoA hydratase/isomerase family.

Its subcellular location is the cytoplasm. The protein localises to the cytosol. It carries out the reaction (2S)-ethylmalonyl-CoA + H(+) = butanoyl-CoA + CO2. The catalysed reaction is (S)-methylmalonyl-CoA + H(+) = propanoyl-CoA + CO2. The enzyme catalyses (2R)-ethylmalonyl-CoA + H(+) = butanoyl-CoA + CO2. Decarboxylates ethylmalonyl-CoA, a potentially toxic metabolite, to form butyryl-CoA, suggesting it might be involved in metabolite proofreading. Acts preferentially on (S)-ethylmalonyl-CoA but also has some activity on the (R)-isomer. Also has methylmalonyl-CoA decarboxylase activity at lower level. The protein is Ethylmalonyl-CoA decarboxylase (ECHDC1) of Gallus gallus (Chicken).